Consider the following 122-residue polypeptide: Large ribosomal subunit protein uL14 (122 aa).

This sequence belongs to the universal ribosomal protein uL14 family. As to quaternary structure, part of the 50S ribosomal subunit. Forms a cluster with proteins L3 and L19. In the 70S ribosome, L14 and L19 interact and together make contacts with the 16S rRNA in bridges B5 and B8.

Functionally, binds to 23S rRNA. Forms part of two intersubunit bridges in the 70S ribosome. The chain is Large ribosomal subunit protein uL14 from Helicobacter hepaticus (strain ATCC 51449 / 3B1).